We begin with the raw amino-acid sequence, 508 residues long: Probable glycine dehydrogenase (decarboxylating) subunit 2 (508 aa).

Lysine 277 is subject to N6-(pyridoxal phosphate)lysine.

It belongs to the GcvP family. C-terminal subunit subfamily. The glycine cleavage system is composed of four proteins: P, T, L and H. In this organism, the P 'protein' is a heterodimer of two subunits. Pyridoxal 5'-phosphate serves as cofactor.

The catalysed reaction is N(6)-[(R)-lipoyl]-L-lysyl-[glycine-cleavage complex H protein] + glycine + H(+) = N(6)-[(R)-S(8)-aminomethyldihydrolipoyl]-L-lysyl-[glycine-cleavage complex H protein] + CO2. Its function is as follows. The glycine cleavage system catalyzes the degradation of glycine. The P protein binds the alpha-amino group of glycine through its pyridoxal phosphate cofactor; CO(2) is released and the remaining methylamine moiety is then transferred to the lipoamide cofactor of the H protein. The chain is Probable glycine dehydrogenase (decarboxylating) subunit 2 from Saccharolobus solfataricus (strain ATCC 35092 / DSM 1617 / JCM 11322 / P2) (Sulfolobus solfataricus).